Here is an 888-residue protein sequence, read N- to C-terminus: ETO1-like protein 1 (888 aa).

One can recognise a BTB domain in the interval 180-280; the sequence is KNVVFKIGEE…ACDRELASLI (101 aa). TPR repeat units follow at residues 381-414, 441-477, 511-544, 637-670, and 711-744; these read VLGF…GHVY, SSVS…DPTL, LECL…CPDY, HERL…KRSF, and GQAL…RHTR. A coiled-coil region spans residues 755 to 793; that stretch reads LRNDKAAAYEEMTRLIEKAQNNASAYEKRSEYCDRELAK. TPR repeat units follow at residues 807–840 and 842–873; these read VYPY…KADL and LLHL…DPNH.

It belongs to the ETO1 family. In terms of assembly, interacts with the C-terminal domain of ACS4, ACS5 and ACS9. In terms of tissue distribution, predominantly expressed in flowers.

Its pathway is protein modification; protein ubiquitination. In terms of biological role, possible regulator of the ethylene pathway, which acts by regulating the stability of 1-aminocyclopropane-1-carboxylate synthase (ACS) enzymes. May act as a substrate-specific adapter that connects ACS enzymes, such as ACS5, to ubiquitin ligase complexes, leading to proteasomal degradation of ACS enzymes. The chain is ETO1-like protein 1 (EOL1) from Arabidopsis thaliana (Mouse-ear cress).